We begin with the raw amino-acid sequence, 949 residues long: Leucine--tRNA ligase (949 aa).

The 'HIGH' region motif lies at 68–79; that stretch reads PYPSGEGLHVGH. Residues 540 to 562 form a disordered region; it reads VPDYSPVSFDPDDAGSEPSPPLG. The 'KMSKS' region signature appears at 722–726; it reads KIGKS. Residue lysine 725 coordinates ATP.

It belongs to the class-I aminoacyl-tRNA synthetase family.

The protein resides in the cytoplasm. It catalyses the reaction tRNA(Leu) + L-leucine + ATP = L-leucyl-tRNA(Leu) + AMP + diphosphate. The polypeptide is Leucine--tRNA ligase (Mycolicibacterium gilvum (strain PYR-GCK) (Mycobacterium gilvum (strain PYR-GCK))).